The following is a 196-amino-acid chain: Molybdenum cofactor guanylyltransferase (196 aa).

Residues Leu10–Gly12, Lys23, Asn51, Asp69, and Asp99 contribute to the GTP site. Asp99 is a Mg(2+) binding site.

This sequence belongs to the MobA family. In terms of assembly, monomer. Requires Mg(2+) as cofactor.

It is found in the cytoplasm. The enzyme catalyses Mo-molybdopterin + GTP + H(+) = Mo-molybdopterin guanine dinucleotide + diphosphate. Transfers a GMP moiety from GTP to Mo-molybdopterin (Mo-MPT) cofactor (Moco or molybdenum cofactor) to form Mo-molybdopterin guanine dinucleotide (Mo-MGD) cofactor. The sequence is that of Molybdenum cofactor guanylyltransferase from Shewanella amazonensis (strain ATCC BAA-1098 / SB2B).